A 457-amino-acid chain; its full sequence is tRNA modification GTPase MnmE (457 aa).

Residues arginine 25, glutamate 87, and arginine 126 each coordinate (6S)-5-formyl-5,6,7,8-tetrahydrofolate. Residues 223-377 form the TrmE-type G domain; it reads GISTAIIGRP…IEERINNLFF (155 aa). Asparagine 233 lines the K(+) pocket. GTP-binding positions include 233–238, 252–258, and 277–280; these read NVGKSS, TDIAGTT, and DTAG. Serine 237 contacts Mg(2+). Residues threonine 252, isoleucine 254, and threonine 257 each contribute to the K(+) site. Threonine 258 is a Mg(2+) binding site. Position 457 (lysine 457) interacts with (6S)-5-formyl-5,6,7,8-tetrahydrofolate.

It belongs to the TRAFAC class TrmE-Era-EngA-EngB-Septin-like GTPase superfamily. TrmE GTPase family. In terms of assembly, homodimer. Heterotetramer of two MnmE and two MnmG subunits. K(+) serves as cofactor.

The protein resides in the cytoplasm. Exhibits a very high intrinsic GTPase hydrolysis rate. Involved in the addition of a carboxymethylaminomethyl (cmnm) group at the wobble position (U34) of certain tRNAs, forming tRNA-cmnm(5)s(2)U34. This chain is tRNA modification GTPase MnmE, found in Streptococcus pneumoniae serotype 2 (strain D39 / NCTC 7466).